Here is a 560-residue protein sequence, read N- to C-terminus: DNA ligase B (560 aa).

The active-site N6-AMP-lysine intermediate is the Lys-124.

This sequence belongs to the NAD-dependent DNA ligase family. LigB subfamily.

The enzyme catalyses NAD(+) + (deoxyribonucleotide)n-3'-hydroxyl + 5'-phospho-(deoxyribonucleotide)m = (deoxyribonucleotide)n+m + AMP + beta-nicotinamide D-nucleotide.. Catalyzes the formation of phosphodiester linkages between 5'-phosphoryl and 3'-hydroxyl groups in double-stranded DNA using NAD as a coenzyme and as the energy source for the reaction. This is DNA ligase B from Citrobacter koseri (strain ATCC BAA-895 / CDC 4225-83 / SGSC4696).